The chain runs to 672 residues: Hydrogenase-4 component B (672 aa).

Topologically, residues 1–5 (MDALQ) are periplasmic. The helical transmembrane segment at 6 to 26 (LLTWSLILYLFASLASLFLLG) threads the bilayer. Topologically, residues 27–30 (LDRL) are cytoplasmic. Residues 31–51 (AIKLSGITSLVGGVIGIISGI) form a helical membrane-spanning segment. The Periplasmic portion of the chain corresponds to 52-79 (TQLHAGVTLVARFAPPFEFADLTLRMDS). The chain crosses the membrane as a helical span at residues 80-100 (LSAFMVLVISLLVVVCSLYSL). At 101-119 (TYMREYEGKGAAAMGFFMN) the chain is on the cytoplasmic side. A helical transmembrane segment spans residues 120-140 (IFIASMVALLVMDNAFWFIVL). Topologically, residues 141-164 (FEMMSLSSWFLVIARQDKTSINAG) are periplasmic. The chain crosses the membrane as a helical span at residues 165-185 (MLYFFIAHAGSVLIMIAFLLM). Residues 186–199 (GRESGSLDFASFRT) lie on the Cytoplasmic side of the membrane. The helical transmembrane segment at 200–220 (LSLSPGLASAVFLLAFFGFGA) threads the bilayer. Topologically, residues 221–242 (KAGMMPLHSWLPRAHPAAPSHA) are periplasmic. A helical transmembrane segment spans residues 243–263 (SALMSGVMVKIGIFGILKVAM). Over 264-272 (DLLAQTGLP) the chain is Cytoplasmic. A helical membrane pass occupies residues 273-293 (LWWGILVMAIGAISALLGVLY). The Periplasmic portion of the chain corresponds to 294–311 (ALAEQDIKRLLAWSTVEN). A helical transmembrane segment spans residues 312-332 (VGIILLAVGVAMVGLSLHDPL). Residues 333–342 (LTVVGLLGAL) are Cytoplasmic-facing. Residues 343–363 (FHLLNHALFKGLLFLGAGAII) form a helical membrane-spanning segment. Topologically, residues 364 to 384 (SRLHTHDMEKMGALAKRMPWT) are periplasmic. Residues 385–405 (AAACLIGCLAISAIPPLNGFI) form a helical membrane-spanning segment. Topologically, residues 406 to 427 (SEWYTWQSLFSLSRVEAVALQL) are cytoplasmic. Residues 428-448 (AGPIAMVMLAVTGGLAVMCFV) form a helical membrane-spanning segment. Topologically, residues 449 to 474 (KMYGITFCGAPRSTHAEEAQEVPNTM) are periplasmic. The chain crosses the membrane as a helical span at residues 475 to 495 (IVAMLLLAALCVLIALSASWL). At 496 to 504 (APKIMHIAH) the chain is on the cytoplasmic side. A helical transmembrane segment spans residues 505-525 (AFTNTPPATVASGIALVPGTF). At 526 to 531 (HTQVTP) the chain is on the periplasmic side. The helical transmembrane segment at 532–552 (SLLLLLLLAMPLLPGLYWLWC) threads the bilayer. Topologically, residues 553 to 651 (RSRRAAFRRT…KEIQHLQSGD (99 aa)) are cytoplasmic. Residues 652 to 672 (FRLYCLYVVAALVVLLIAIAV) traverse the membrane as a helical segment.

It belongs to the complex I subunit 5 family.

It localises to the cell inner membrane. In terms of biological role, possible component of hydrogenase 4. The protein is Hydrogenase-4 component B of Escherichia coli (strain K12).